Reading from the N-terminus, the 319-residue chain is L-lactate dehydrogenase (319 aa).

NAD(+) is bound by residues Val-11, Asp-32, Arg-37, Tyr-62, and 76 to 77 (GV). Substrate contacts are provided by residues Gln-79, Arg-85, and 117 to 120 (NPVD). NAD(+) contacts are provided by residues 115-117 (VTN) and Ser-140. 145–148 (DTAR) is a binding site for substrate. Residues Arg-150 and His-165 each contribute to the beta-D-fructose 1,6-bisphosphate site. Catalysis depends on His-172, which acts as the Proton acceptor. Tyr-217 carries the post-translational modification Phosphotyrosine. Thr-226 contributes to the substrate binding site.

The protein belongs to the LDH/MDH superfamily. LDH family. In terms of assembly, homotetramer.

It localises to the cytoplasm. The catalysed reaction is (S)-lactate + NAD(+) = pyruvate + NADH + H(+). The protein operates within fermentation; pyruvate fermentation to lactate; (S)-lactate from pyruvate: step 1/1. Allosterically activated by fructose 1,6-bisphosphate (FBP). Functionally, catalyzes the conversion of lactate to pyruvate. In Thermotoga sp. (strain RQ2), this protein is L-lactate dehydrogenase.